The sequence spans 438 residues: MEGADLAVKLLSTWLTLVGGLILLPSAFGLSLGISEIYMKILVKTLEWATLRIQKGAPKESALKNSASVGIIQRDESPMEKGLSGLRGRDFELSDVFYFSKKGLEAIVEDEVTQRFSSEELVSWNLLTRTNVNFQYISPRLTMVWVLGVLVRYCFLLPLRVTLAFIGISLLIIGTTLVGQLPDSSLKNWLSELVHLTCCRICVRSLSGTIHYHNKQYRPQKGGICVANHTSPIDVLILATDGCYAMVGQVHGGLMGIIQRAMVKACPHVWFERSEIKDRHLVTKRLKEHIADKKKLPILIFPEGTCINNTSVMMFKKGSFEIGGTIYPVAIKYNPQFGDAFWNSSKYNLVSYLLRIMTSWAIVCDVWYMPPMTREEGEDAVQFANRVKSAIAVQGGLTELPWDGGLKRAKVKDTFKEEQQKNYSKMIVGNGSPNLARD.

The chain crosses the membrane as a helical span at residues 14-34 (WLTLVGGLILLPSAFGLSLGI). Ser-68 and Ser-77 each carry phosphoserine. The next 2 helical transmembrane spans lie at 137 to 157 (ISPR…CFLL) and 161 to 181 (VTLA…VGQL). Residues 229-234 (HTSPID) carry the HXXXXD motif motif.

The protein belongs to the 1-acyl-sn-glycerol-3-phosphate acyltransferase family. As to expression, most abundant in epididymal fat, followed by small intestine, brown adipose tissue, kidney, heart and colon.

It is found in the endoplasmic reticulum membrane. The catalysed reaction is sn-glycerol 3-phosphate + an acyl-CoA = a 1-acyl-sn-glycero-3-phosphate + CoA. It catalyses the reaction a 1-acyl-sn-glycero-3-phosphate + an acyl-CoA = a 1,2-diacyl-sn-glycero-3-phosphate + CoA. The enzyme catalyses dodecanoyl-CoA + sn-glycerol 3-phosphate = 1-dodecanoyl-sn-glycerol 3-phosphate + CoA. It carries out the reaction sn-glycerol 3-phosphate + hexadecanoyl-CoA = 1-hexadecanoyl-sn-glycero-3-phosphate + CoA. The catalysed reaction is sn-glycerol 3-phosphate + (9Z)-octadecenoyl-CoA = 1-(9Z-octadecenoyl)-sn-glycero-3-phosphate + CoA. It catalyses the reaction (9Z,12Z)-octadecadienoyl-CoA + sn-glycerol 3-phosphate = 1-(9Z,12Z)-octadecadienoyl-sn-glycero-3-phosphate + CoA. The enzyme catalyses 1-tetradecanoyl-sn-glycerol 3-phosphate + (9Z)-octadecenoyl-CoA = 1-tetradecanoyl-2-(9Z)-octadecenoyl-sn-glycero-3-phosphate + CoA. It carries out the reaction 1-hexadecanoyl-sn-glycero-3-phosphate + (9Z)-octadecenoyl-CoA = 1-hexadecanoyl-2-(9Z-octadecenoyl)-sn-glycero-3-phosphate + CoA. The catalysed reaction is 1-(9Z-octadecenoyl)-sn-glycero-3-phosphate + (9Z)-octadecenoyl-CoA = 1,2-di-(9Z-octadecenoyl)-sn-glycero-3-phosphate + CoA. It catalyses the reaction 1-(6Z,9Z,12Z-octadecatrienoyl)-sn-glycero-3-phosphate + (9Z)-octadecenoyl-CoA = (6Z,9Z,12Z)-octadecatrienoyl-2-(9Z)-octadecenoyl-sn-glycero-3-phosphate + CoA. The enzyme catalyses 1-(9Z,12Z,15Z)-octadecatrienoyl-sn-glycero-3-phosphate + (9Z)-octadecenoyl-CoA = 1-(9Z,12Z,15Z)-octadecatrienoyl-2-(9Z)-octadecenoyl-sn-glycero-3-phosphate + CoA. It carries out the reaction 1-(9Z-octadecenoyl)-sn-glycero-3-phosphate + tetradecanoyl-CoA = 1-(9Z)-octadecenoyl-2-tetradecanoyl-sn-glycero-3-phosphate + CoA. The catalysed reaction is 1-(9Z-octadecenoyl)-sn-glycero-3-phosphate + hexadecanoyl-CoA = 1-(9Z)-octadecenoyl-2-hexadecanoyl-sn-glycero-3-phosphate + CoA. It catalyses the reaction 1-(9Z-octadecenoyl)-sn-glycero-3-phosphate + octadecanoyl-CoA = 1-(9Z-octadecenoyl)-2-octadecanoyl-sn-glycero-3-phosphate + CoA. The enzyme catalyses 1-(9Z-octadecenoyl)-sn-glycero-3-phosphate + (9Z,12Z)-octadecadienoyl-CoA = 1-(9Z)-octadecenoyl-2-(9Z,12Z)-octadecadienoyl-sn-glycero-3-phosphate + CoA. It carries out the reaction 1-(5Z,8Z,11Z,14Z-eicosatetraenoyl)-sn-glycero-3-phosphate + (9Z)-octadecenoyl-CoA = 1-(5Z,8Z,11Z,14Z)-eicosatetraenoyl-2-(9Z)-octadecenoyl-sn-glycero-3-phosphate + CoA. Its pathway is glycerolipid metabolism; triacylglycerol biosynthesis. It participates in phospholipid metabolism; CDP-diacylglycerol biosynthesis; CDP-diacylglycerol from sn-glycerol 3-phosphate: step 1/3. Its function is as follows. Converts glycerol-3-phosphate to 1-acyl-sn-glycerol-3-phosphate (lysophosphatidic acid or LPA) by incorporating an acyl moiety at the sn-1 position of the glycerol backbone. Also converts LPA into 1,2-diacyl-sn-glycerol-3-phosphate (phosphatidic acid or PA) by incorporating an acyl moiety at the sn-2 position of the glycerol backbone. Protects cells against lipotoxicity. The polypeptide is Glycerol-3-phosphate acyltransferase 3 (Mus musculus (Mouse)).